A 462-amino-acid chain; its full sequence is MVSPRKGKRIRMLKKNDIIQVAISDLSHEGAGVAKHDGFVFFVDNALPEEVIDMRVLKVNKNSGFGKVEAYHYLSPARNADVNLTYLRTGIADLGHLTYEDQLTFKKKQVQDSLYKIAGISDVTVESTIGMTEPLAYRNKAQVPVRRVNGQLETGFFRKHSHDLIPISDYYIQDKEIDRLINFTRDLLRRFDIKPYDETEQTGLLRNIVVRRGHYSGEMMVVLVTTRPKVFRVDQVIEKIVEAFPAVVSIIQNINDENTNAIFGKDFKTLYGKDTITDSMLGNNYAISAQSFYQVNTVMAEKLYQTAIAFSDLSKDDIVIDAYSGIGTIGLSFAKTVKAVYGVEVIEAAVRDAQQNAALNGITNAYFVADTAEHAMATWAKDGIKPSVILVDPPRKGLTESFIQASVAMGPQKITYVSCNPATMARDIKRYQELGYKLAKVQPVDLFPQTHHVECVVLLIKE.

A TRAM domain is found at 12 to 70 (MLKKNDIIQVAISDLSHEGAGVAKHDGFVFFVDNALPEEVIDMRVLKVNKNSGFGKVEA). Residues glutamine 294, tyrosine 323, glutamate 344, and aspartate 392 each contribute to the S-adenosyl-L-methionine site. Catalysis depends on cysteine 419, which acts as the Nucleophile.

The protein belongs to the class I-like SAM-binding methyltransferase superfamily. RNA M5U methyltransferase family.

This is an uncharacterized protein from Streptococcus pyogenes serotype M18 (strain MGAS8232).